The primary structure comprises 520 residues: 1,4-alpha-glucan branching enzyme TTHA1902 (520 aa).

Catalysis depends on Glu184, which acts as the Nucleophile. Substrate is bound by residues Arg265 and Gly282. Asp353 (proton donor) is an active-site residue. Residues Trp404, Asp460, and Gln469 each contribute to the substrate site.

This sequence belongs to the glycosyl hydrolase 57 family.

It carries out the reaction Transfers a segment of a (1-&gt;4)-alpha-D-glucan chain to a primary hydroxy group in a similar glucan chain.. It functions in the pathway glycan biosynthesis; glycogen biosynthesis. Its function is as follows. Catalyzes the formation of branch points in alpha-glucans by cleavage of an alpha-1,4 glycosidic bond and subsequent transfer of the cleaved-off oligosaccharide to a new alpha-1,6 position. The branch chain-length distribution of the reaction products shows degree of polymerization (DP) of 3 to 13, with two local maxima at DP 7 and DP 11. Exhibits an alpha-retaining catalytic mechanism. Is involved in glycogen biosynthesis. Shows a secondary activity, i.e. the hydrolysis of the substrate, being 4% of the total activity. Can use amylose as substrate but not alpha-1,4-linked oligosaccharides of 2-7 glucose residues, beta-cyclodextrin, 6-O-glucosyl-beta-cyclodextrin and 6-O-maltosyl-beta-cyclodextrin. Is not able to branch amylopectin further, it only hydrolyzes amylopectin. Thus, displays preference for linear and long substrates (amylose) over branched structures (amylopectin). The polypeptide is 1,4-alpha-glucan branching enzyme TTHA1902 (Thermus thermophilus (strain ATCC 27634 / DSM 579 / HB8)).